The chain runs to 317 residues: tRNA-cytidine(32) 2-sulfurtransferase (317 aa).

Residues serine 46–serine 51 carry the PP-loop motif motif. Cysteine 121, cysteine 124, and cysteine 212 together coordinate [4Fe-4S] cluster.

It belongs to the TtcA family. In terms of assembly, homodimer. Mg(2+) is required as a cofactor. Requires [4Fe-4S] cluster as cofactor.

Its subcellular location is the cytoplasm. The enzyme catalyses cytidine(32) in tRNA + S-sulfanyl-L-cysteinyl-[cysteine desulfurase] + AH2 + ATP = 2-thiocytidine(32) in tRNA + L-cysteinyl-[cysteine desulfurase] + A + AMP + diphosphate + H(+). The protein operates within tRNA modification. Its function is as follows. Catalyzes the ATP-dependent 2-thiolation of cytidine in position 32 of tRNA, to form 2-thiocytidine (s(2)C32). The sulfur atoms are provided by the cysteine/cysteine desulfurase (IscS) system. This is tRNA-cytidine(32) 2-sulfurtransferase from Shewanella loihica (strain ATCC BAA-1088 / PV-4).